The chain runs to 456 residues: Probable glycine dehydrogenase (decarboxylating) subunit 1 (456 aa).

This sequence belongs to the GcvP family. N-terminal subunit subfamily. The glycine cleavage system is composed of four proteins: P, T, L and H. In this organism, the P 'protein' is a heterodimer of two subunits.

The enzyme catalyses N(6)-[(R)-lipoyl]-L-lysyl-[glycine-cleavage complex H protein] + glycine + H(+) = N(6)-[(R)-S(8)-aminomethyldihydrolipoyl]-L-lysyl-[glycine-cleavage complex H protein] + CO2. In terms of biological role, the glycine cleavage system catalyzes the degradation of glycine. The P protein binds the alpha-amino group of glycine through its pyridoxal phosphate cofactor; CO(2) is released and the remaining methylamine moiety is then transferred to the lipoamide cofactor of the H protein. This chain is Probable glycine dehydrogenase (decarboxylating) subunit 1, found in Rhizorhabdus wittichii (strain DSM 6014 / CCUG 31198 / JCM 15750 / NBRC 105917 / EY 4224 / RW1) (Sphingomonas wittichii).